A 290-amino-acid chain; its full sequence is ATP synthase gamma chain (290 aa).

The protein belongs to the ATPase gamma chain family. In terms of assembly, F-type ATPases have 2 components, CF(1) - the catalytic core - and CF(0) - the membrane proton channel. CF(1) has five subunits: alpha(3), beta(3), gamma(1), delta(1), epsilon(1). CF(0) has three main subunits: a, b and c.

The protein resides in the cell membrane. Functionally, produces ATP from ADP in the presence of a proton gradient across the membrane. The gamma chain is believed to be important in regulating ATPase activity and the flow of protons through the CF(0) complex. In Rubrobacter xylanophilus (strain DSM 9941 / JCM 11954 / NBRC 16129 / PRD-1), this protein is ATP synthase gamma chain.